Reading from the N-terminus, the 144-residue chain is MGTLRRFPASVLQIALALFLLASGARDLVHVDAGVFNAAVYFLGGLFRGHVAIGVLTLAVSLCCLTAGFFLLVDFLRPELSCVSAVLALFVVLWALNMVLVDVVGAFGRGKVLQNVSSALEHLHHTAVDLLVLGALIFVRQHTR.

4 helical membrane-spanning segments follow: residues 7–29 (FPAS…RDLV), 51–73 (VAIG…FLLV), 85–107 (AVLA…VGAF), and 122–139 (HLHH…LIFV).

The protein resides in the cell membrane. This is an uncharacterized protein from Treponema pallidum (strain Nichols).